The chain runs to 303 residues: Coenzyme PQQ synthesis protein B (303 aa).

The protein belongs to the PqqB family.

The protein operates within cofactor biosynthesis; pyrroloquinoline quinone biosynthesis. May be involved in the transport of PQQ or its precursor to the periplasm. The protein is Coenzyme PQQ synthesis protein B of Acinetobacter baumannii (strain AB0057).